Reading from the N-terminus, the 177-residue chain is Anti-apoptotic protein NR13 (177 aa).

The BH1 signature appears at 75-94 (LEAEGGLNWGRLLALVVFTG). The helical transmembrane segment at 86–106 (LLALVVFTGTLAAALAESGCE) threads the bilayer. The short motif at 126 to 141 (EWLEEHGGWDGFCRFF) is the BH2 element. The chain crosses the membrane as a helical span at residues 156–176 (SNAIMAAAGFGIAGLAFLLVV).

The protein belongs to the Bcl-2 family. Interacts with BAX. In terms of tissue distribution, expressed preferentially in heart, skeletal muscle, retina, optical tectum and bursa of Fabricius.

Its subcellular location is the cell membrane. Shows anti-apoptotic properties. Counteract the pro-apoptotic activity of BAX. The chain is Anti-apoptotic protein NR13 (NR13) from Gallus gallus (Chicken).